A 132-amino-acid chain; its full sequence is Small ribosomal subunit protein uS8 (132 aa).

This sequence belongs to the universal ribosomal protein uS8 family. In terms of assembly, part of the 30S ribosomal subunit. Contacts proteins S5 and S12.

Functionally, one of the primary rRNA binding proteins, it binds directly to 16S rRNA central domain where it helps coordinate assembly of the platform of the 30S subunit. The protein is Small ribosomal subunit protein uS8 of Rhodococcus erythropolis (strain PR4 / NBRC 100887).